The following is a 334-amino-acid chain: Fructose-1,6-bisphosphatase class 1 (334 aa).

Mg(2+) contacts are provided by glutamate 90, aspartate 113, leucine 115, and aspartate 116. Substrate-binding positions include 116-119 (DGSS), asparagine 209, tyrosine 242, and lysine 272. A Mg(2+)-binding site is contributed by glutamate 278.

The protein belongs to the FBPase class 1 family. Homotetramer. Mg(2+) is required as a cofactor.

Its subcellular location is the cytoplasm. The catalysed reaction is beta-D-fructose 1,6-bisphosphate + H2O = beta-D-fructose 6-phosphate + phosphate. It participates in carbohydrate biosynthesis; gluconeogenesis. The protein is Fructose-1,6-bisphosphatase class 1 of Actinobacillus pleuropneumoniae serotype 7 (strain AP76).